The following is a 332-amino-acid chain: Melanocortin receptor 4 (332 aa).

The Extracellular segment spans residues 1 to 43 (MNSTLQHGMHTSLHFWNRSTYGQHSNATESLGKGYPDGGCYEQ). N-linked (GlcNAc...) asparagine glycosylation is found at Asn-2, Asn-17, and Asn-26. 2 disulfide bridges follow: Cys-40–Cys-279 and Cys-271–Cys-277. The helical transmembrane segment at 44-69 (LFVSPEVFVTLGVISLLENILVIVAI) threads the bilayer. The Cytoplasmic portion of the chain corresponds to 70–81 (AKNKNLHSPMYF). Residues 82–106 (FICSLAVADMLVSVSNGSETIVITL) traverse the membrane as a helical segment. The Ca(2+) site is built by Glu-100, Asp-122, and Asp-126. Residues 107-123 (LNSTDTDAQSFTVNIDN) lie on the Extracellular side of the membrane. The chain crosses the membrane as a helical span at residues 124–145 (VIDSVICSSLLASICSLLSIAV). At 146–165 (DRYFTIFYALQYHNIMTVRR) the chain is on the cytoplasmic side. A helical transmembrane segment spans residues 166-186 (VGIIISCIWAACTVSGILFII). At 187–191 (YSDST) the chain is on the extracellular side. Residues 192–215 (AVIICLITMFFTMLALMASLYVHM) form a helical membrane-spanning segment. Residues 216-248 (FLMARLHIKRIAVLPGTGTIRQGANMKGAITLT) are Cytoplasmic-facing. The chain crosses the membrane as a helical span at residues 249–271 (ILIGVFVVCWAPFFLHLIFYISC). The Extracellular portion of the chain corresponds to 272–280 (PQNPYCVCF). The chain crosses the membrane as a helical span at residues 281-304 (MSHFNLYLILIMCNSIIDPLIYAL). Topologically, residues 305–332 (RSQELRKTFKEIICCYPLGGLCDLSSRY) are cytoplasmic. Cys-318 is lipidated: S-palmitoyl cysteine.

This sequence belongs to the G-protein coupled receptor 1 family. Homodimer; disulfide-linked, also forms higher order oligomers. Interacts with GNAS. Interacts with ATRNL1. Interacts with MGRN1; this interaction competes with GNAS-binding and thus inhibits agonist-induced cAMP production. Interacts with MRAP and MRAP2; these associated factors increase ligand-sensitivity and generation of cAMP.

It localises to the cell membrane. Its function is as follows. Hormone receptor that acts as a key component of the leptin-melanocortin pathway at the intersection of homeostatic maintenance of energetic state. Plays a role in regulating food intake: activation by a stimulating hormone such as anorexigenic alpha-melanocyte stimulating hormone (alpha-MSH) inhibits appetite, whereas binding to a natural antagonist like Agouti-related protein/AGRP promotes appetite. G-protein-coupled receptor that activates conventional Galphas signaling leading to induction of anorexogenic signaling in the hypothalamus to result in negative energy balance. Regulates the firing activity of neurons from the hypothalamus by alpha-MSH and AGRP independently of Galphas signaling by ligand-induced coupling of closure of inwardly rectifying potassium channel KCNJ13. In intestinal epithelial cells, plays a role in the inhibition of hepatic glucose production via nesfatin-1/NUCB2 leading to increased cyclic adenosine monophosphate (cAMP) levels and glucagon-like peptide 1 (GLP-1) secretion in the intestinal epithelium. This Vulpes vulpes (Red fox) protein is Melanocortin receptor 4 (MC4R).